Here is an 83-residue protein sequence, read N- to C-terminus: Cytochrome b559 subunit alpha (83 aa).

Residues 21 to 35 (VIHSITIPSLFIAGW) traverse the membrane as a helical segment. His-23 contacts heme.

Belongs to the PsbE/PsbF family. Heterodimer of an alpha subunit and a beta subunit. PSII is composed of 1 copy each of membrane proteins PsbA, PsbB, PsbC, PsbD, PsbE, PsbF, PsbH, PsbI, PsbJ, PsbK, PsbL, PsbM, PsbT, PsbX, PsbY, PsbZ, Psb30/Ycf12, at least 3 peripheral proteins of the oxygen-evolving complex and a large number of cofactors. It forms dimeric complexes. The cofactor is heme b.

It localises to the plastid. The protein localises to the chloroplast thylakoid membrane. Its function is as follows. This b-type cytochrome is tightly associated with the reaction center of photosystem II (PSII). PSII is a light-driven water:plastoquinone oxidoreductase that uses light energy to abstract electrons from H(2)O, generating O(2) and a proton gradient subsequently used for ATP formation. It consists of a core antenna complex that captures photons, and an electron transfer chain that converts photonic excitation into a charge separation. This chain is Cytochrome b559 subunit alpha, found in Tupiella akineta (Green alga).